Consider the following 535-residue polypeptide: Bifunctional purine biosynthesis protein PurH (535 aa).

In terms of domain architecture, MGS-like spans Thr-6–Val-151.

The protein belongs to the PurH family.

It carries out the reaction (6R)-10-formyltetrahydrofolate + 5-amino-1-(5-phospho-beta-D-ribosyl)imidazole-4-carboxamide = 5-formamido-1-(5-phospho-D-ribosyl)imidazole-4-carboxamide + (6S)-5,6,7,8-tetrahydrofolate. It catalyses the reaction IMP + H2O = 5-formamido-1-(5-phospho-D-ribosyl)imidazole-4-carboxamide. It functions in the pathway purine metabolism; IMP biosynthesis via de novo pathway; 5-formamido-1-(5-phospho-D-ribosyl)imidazole-4-carboxamide from 5-amino-1-(5-phospho-D-ribosyl)imidazole-4-carboxamide (10-formyl THF route): step 1/1. Its pathway is purine metabolism; IMP biosynthesis via de novo pathway; IMP from 5-formamido-1-(5-phospho-D-ribosyl)imidazole-4-carboxamide: step 1/1. This is Bifunctional purine biosynthesis protein PurH from Pseudomonas fluorescens (strain ATCC BAA-477 / NRRL B-23932 / Pf-5).